Here is a 196-residue protein sequence, read N- to C-terminus: Ribonuclease S-F11 (196 aa).

Cysteine 16 and cysteine 21 are joined by a disulfide. Residue asparagine 28 is glycosylated (N-linked (GlcNAc...) asparagine). Catalysis depends on histidine 32, which acts as the Proton donor. RNA contacts are provided by residues histidine 32 and 69–70 (QL). 3 cysteine pairs are disulfide-bonded: cysteine 46–cysteine 94, cysteine 153–cysteine 186, and cysteine 169–cysteine 180. The active site involves glutamine 87. 90 to 91 (KH) contributes to the RNA binding site. Histidine 91 (proton acceptor) is an active-site residue.

Belongs to the RNase T2 family. As to quaternary structure, monomer.

The protein localises to the secreted. It is found in the extracellular space. It catalyses the reaction a ribonucleotidyl-ribonucleotide-RNA + H2O = a 3'-end 3'-phospho-ribonucleotide-RNA + a 5'-end dephospho-ribonucleoside-RNA + H(+). Functionally, self-incompatibility (SI) is the inherited ability of a flowering plant to prevent self-fertilization by discriminating between self and non-self pollen during pollination. In many species of the Solanaceae, self-incompatibility is controlled by the single, multiallelic locus S. In Nicotiana alata (Winged tobacco), this protein is Ribonuclease S-F11.